Consider the following 409-residue polypeptide: MSTKIKGELFPSRSLVSKKWTFLLCFGSFCFGILFTDRMWIIPESKDMPRPSVSTEAERLKLISEGCDPKTLYQKEVNRDPQALFGEVSKTHNAIQTLDKTISSLEMELAAARSAQESLVNGAPISNDMEKKQLPGKRRYLMVVGINTAFSSRKRRDSVRTTWMPSGEKRKKLEEEKGIIIRFVIGHSATAGGILDRSIEAEDKKHGDFLRLDHVEGYLELSGKTKTYFSTAVSKWDAEFYVKVDDDVHVNIATLGETLVRHRKKHRVYLGCMKSGPVLSQKGVRYHEPEYWKFGENGNKYFRHATGQLYAISRDLASYISLNQHVLHKYANEDVTLGAWFIGLDVTHIDDRRLCCGTPPDCEWKAQAGNICVASFDWTCSGICRSADRIKEVHKRCGEPENAIWKARF.

The chain crosses the membrane as a helical; Signal-anchor for type II membrane protein span at residues 20–42 (WTFLLCFGSFCFGILFTDRMWII).

The protein belongs to the glycosyltransferase 31 family. Mn(2+) is required as a cofactor.

Its subcellular location is the golgi apparatus membrane. Its pathway is protein modification; protein glycosylation. Beta-1,3-galactosyltransferase that transfers galactose from UDP-galactose to substrates with a terminal glycosyl residue. The protein is Probable beta-1,3-galactosyltransferase 3 (B3GALT3) of Arabidopsis thaliana (Mouse-ear cress).